We begin with the raw amino-acid sequence, 345 residues long: Opioid-binding protein/cell adhesion molecule (345 aa).

Positions 1–27 (MGVCGYLFLPWKCLVVVSLRLLFLVPT) are cleaved as a signal peptide. Ig-like C2-type domains follow at residues 39–126 (PKAM…PKTS), 136–219 (PQIM…VKIT), and 223–310 (PPYI…ASIT). Residues asparagine 44, asparagine 70, and asparagine 140 are each glycosylated (N-linked (GlcNAc...) asparagine). A disulfide bridge connects residues cysteine 57 and cysteine 115. 2 disulfide bridges follow: cysteine 157–cysteine 202 and cysteine 244–cysteine 296. N-linked (GlcNAc...) asparagine glycans are attached at residues asparagine 285, asparagine 293, and asparagine 306. Asparagine 322 is lipidated: GPI-anchor amidated asparagine. Residues 323–345 (SASRALACLWLSGTLLAHFFIKF) constitute a propeptide, removed in mature form.

The protein belongs to the immunoglobulin superfamily. IgLON family.

Its subcellular location is the cell membrane. Functionally, binds opioids in the presence of acidic lipids; probably involved in cell contact. The sequence is that of Opioid-binding protein/cell adhesion molecule (OPCML) from Homo sapiens (Human).